We begin with the raw amino-acid sequence, 557 residues long: 2-succinyl-5-enolpyruvyl-6-hydroxy-3-cyclohexene-1-carboxylate synthase (557 aa).

This sequence belongs to the TPP enzyme family. MenD subfamily. In terms of assembly, homodimer. The cofactor is Mg(2+). Mn(2+) is required as a cofactor. Requires thiamine diphosphate as cofactor.

The catalysed reaction is isochorismate + 2-oxoglutarate + H(+) = 5-enolpyruvoyl-6-hydroxy-2-succinyl-cyclohex-3-ene-1-carboxylate + CO2. Its pathway is quinol/quinone metabolism; 1,4-dihydroxy-2-naphthoate biosynthesis; 1,4-dihydroxy-2-naphthoate from chorismate: step 2/7. It participates in quinol/quinone metabolism; menaquinone biosynthesis. Its function is as follows. Catalyzes the thiamine diphosphate-dependent decarboxylation of 2-oxoglutarate and the subsequent addition of the resulting succinic semialdehyde-thiamine pyrophosphate anion to isochorismate to yield 2-succinyl-5-enolpyruvyl-6-hydroxy-3-cyclohexene-1-carboxylate (SEPHCHC). This chain is 2-succinyl-5-enolpyruvyl-6-hydroxy-3-cyclohexene-1-carboxylate synthase, found in Staphylococcus aureus (strain bovine RF122 / ET3-1).